The following is a 252-amino-acid chain: 5-oxoprolinase subunit A 1 (252 aa).

It belongs to the LamB/PxpA family. Forms a complex composed of PxpA, PxpB and PxpC.

It carries out the reaction 5-oxo-L-proline + ATP + 2 H2O = L-glutamate + ADP + phosphate + H(+). In terms of biological role, catalyzes the cleavage of 5-oxoproline to form L-glutamate coupled to the hydrolysis of ATP to ADP and inorganic phosphate. This chain is 5-oxoprolinase subunit A 1, found in Pseudomonas aeruginosa (strain ATCC 15692 / DSM 22644 / CIP 104116 / JCM 14847 / LMG 12228 / 1C / PRS 101 / PAO1).